The chain runs to 288 residues: Bifunctional protein FolD (288 aa).

NADP(+) is bound by residues 164 to 166 (GTS) and Ile-230.

This sequence belongs to the tetrahydrofolate dehydrogenase/cyclohydrolase family. As to quaternary structure, homodimer.

It catalyses the reaction (6R)-5,10-methylene-5,6,7,8-tetrahydrofolate + NADP(+) = (6R)-5,10-methenyltetrahydrofolate + NADPH. The catalysed reaction is (6R)-5,10-methenyltetrahydrofolate + H2O = (6R)-10-formyltetrahydrofolate + H(+). Its pathway is one-carbon metabolism; tetrahydrofolate interconversion. Catalyzes the oxidation of 5,10-methylenetetrahydrofolate to 5,10-methenyltetrahydrofolate and then the hydrolysis of 5,10-methenyltetrahydrofolate to 10-formyltetrahydrofolate. The chain is Bifunctional protein FolD from Mycoplasma mycoides subsp. mycoides SC (strain CCUG 32753 / NCTC 10114 / PG1).